Consider the following 505-residue polypeptide: ATP synthase subunit alpha (505 aa).

An ATP-binding site is contributed by 171–178 (GDRQTGKT).

Belongs to the ATPase alpha/beta chains family. F-type ATPases have 2 components, CF(1) - the catalytic core - and CF(0) - the membrane proton channel. CF(1) has five subunits: alpha(3), beta(3), gamma(1), delta(1), epsilon(1). CF(0) has three main subunits: a(1), b(2) and c(9-12). The alpha and beta chains form an alternating ring which encloses part of the gamma chain. CF(1) is attached to CF(0) by a central stalk formed by the gamma and epsilon chains, while a peripheral stalk is formed by the delta and b chains.

Its subcellular location is the cell inner membrane. It carries out the reaction ATP + H2O + 4 H(+)(in) = ADP + phosphate + 5 H(+)(out). Its function is as follows. Produces ATP from ADP in the presence of a proton gradient across the membrane. The alpha chain is a regulatory subunit. This Campylobacter concisus (strain 13826) protein is ATP synthase subunit alpha.